The following is a 422-amino-acid chain: Glycine amidinotransferase, mitochondrial (422 aa).

Residues 1–37 (MLRVRCLRGGSRGAEAVHYIGSMLRKSFVGWVQRSFQ) constitute a mitochondrion transit peptide. Active-site residues include Asp-253 and His-302. Cys-406 serves as the catalytic Amidino-cysteine intermediate.

Belongs to the amidinotransferase family. Homodimer. Ubiquitously expressed in adult tissues, with highest levels in muscle and intermediate levels in eye, heart, liver, stomach and testis. In stage 28 embryos, expression is higher in the dorsal and ventral parts of the trunk than in the head. In middle gastrulae, expression is highest around the yolk plug, while in stage 15 and tailbud stage embryos, expression is largely restricted to the region around the presumptive notochord and gut.

It localises to the mitochondrion inner membrane. The catalysed reaction is L-arginine + glycine = guanidinoacetate + L-ornithine. It functions in the pathway amine and polyamine biosynthesis; creatine biosynthesis; creatine from L-arginine and glycine: step 1/2. In terms of biological role, catalyzes the biosynthesis of guanidinoacetate, the immediate precursor of creatine. Creatine plays a vital role in energy metabolism in muscle tissues. May play a role in embryonic and central nervous system development. This chain is Glycine amidinotransferase, mitochondrial, found in Xenopus laevis (African clawed frog).